The primary structure comprises 380 residues: Cytochrome b (380 aa).

The next 4 helical transmembrane spans lie at 34–54 (FGSL…LLAM), 78–99 (WLIR…YLHI), 114–134 (WNTG…GYVL), and 179–199 (FFAL…IHLT). Residues histidine 84 and histidine 98 each contribute to the heme b site. Residues histidine 183 and histidine 197 each contribute to the heme b site. Residue histidine 202 participates in a ubiquinone binding. Transmembrane regions (helical) follow at residues 227 to 247 (LKDT…ALFS), 289 to 309 (LGGV…PLLH), 321 to 341 (LSQL…WVGS), and 348 to 368 (FIII…ILLP).

Belongs to the cytochrome b family. The cytochrome bc1 complex contains 11 subunits: 3 respiratory subunits (MT-CYB, CYC1 and UQCRFS1), 2 core proteins (UQCRC1 and UQCRC2) and 6 low-molecular weight proteins (UQCRH/QCR6, UQCRB/QCR7, UQCRQ/QCR8, UQCR10/QCR9, UQCR11/QCR10 and a cleavage product of UQCRFS1). This cytochrome bc1 complex then forms a dimer. The cofactor is heme b.

It localises to the mitochondrion inner membrane. Component of the ubiquinol-cytochrome c reductase complex (complex III or cytochrome b-c1 complex) that is part of the mitochondrial respiratory chain. The b-c1 complex mediates electron transfer from ubiquinol to cytochrome c. Contributes to the generation of a proton gradient across the mitochondrial membrane that is then used for ATP synthesis. The sequence is that of Cytochrome b (MT-CYB) from Fregetta tropica (Black-bellied storm-petrel).